A 63-amino-acid polypeptide reads, in one-letter code: Protein DsrB (63 aa).

Belongs to the DsrB family.

In Yersinia pseudotuberculosis serotype O:3 (strain YPIII), this protein is Protein DsrB.